Here is a 406-residue protein sequence, read N- to C-terminus: Serine/threonine transporter SstT (406 aa).

9 helical membrane-spanning segments follow: residues 15–35 (LVIQ…VSPS), 47–67 (FVGA…AASI), 81–101 (IIVM…VLSF), 140–160 (ALMS…GLAL), 191–211 (FGIF…ALAG), 215–235 (LLVV…PAMV), 289–309 (IPLG…TLTL), 315–335 (MGIE…AVSA), and 362–382 (IAMQ…SAET).

It belongs to the dicarboxylate/amino acid:cation symporter (DAACS) (TC 2.A.23) family.

The protein resides in the cell inner membrane. The catalysed reaction is L-serine(in) + Na(+)(in) = L-serine(out) + Na(+)(out). The enzyme catalyses L-threonine(in) + Na(+)(in) = L-threonine(out) + Na(+)(out). Its function is as follows. Involved in the import of serine and threonine into the cell, with the concomitant import of sodium (symport system). The polypeptide is Serine/threonine transporter SstT (Vibrio vulnificus (strain YJ016)).